A 293-amino-acid polypeptide reads, in one-letter code: Ribosomal protein L11 methyltransferase (293 aa).

S-adenosyl-L-methionine is bound by residues T145, G166, D188, and N230.

This sequence belongs to the methyltransferase superfamily. PrmA family.

The protein localises to the cytoplasm. It catalyses the reaction L-lysyl-[protein] + 3 S-adenosyl-L-methionine = N(6),N(6),N(6)-trimethyl-L-lysyl-[protein] + 3 S-adenosyl-L-homocysteine + 3 H(+). Its function is as follows. Methylates ribosomal protein L11. The chain is Ribosomal protein L11 methyltransferase from Escherichia coli O81 (strain ED1a).